We begin with the raw amino-acid sequence, 346 residues long: S-adenosylmethionine:tRNA ribosyltransferase-isomerase (346 aa).

The protein belongs to the QueA family. Monomer.

It localises to the cytoplasm. It catalyses the reaction 7-aminomethyl-7-carbaguanosine(34) in tRNA + S-adenosyl-L-methionine = epoxyqueuosine(34) in tRNA + adenine + L-methionine + 2 H(+). It functions in the pathway tRNA modification; tRNA-queuosine biosynthesis. Transfers and isomerizes the ribose moiety from AdoMet to the 7-aminomethyl group of 7-deazaguanine (preQ1-tRNA) to give epoxyqueuosine (oQ-tRNA). This is S-adenosylmethionine:tRNA ribosyltransferase-isomerase from Neisseria gonorrhoeae (strain ATCC 700825 / FA 1090).